Consider the following 345-residue polypeptide: Fe-S cluster assembly protein DRE2 (345 aa).

The tract at residues 29-163 (GDSGDRTLLL…KPDYAEQEVV (135 aa)) is N-terminal SAM-like domain. Residues 164-237 (PLRFGAKKVN…EDTLLTEADL (74 aa)) form a linker region. Residues Cys-247, Cys-258, Cys-261, and Cys-263 each contribute to the [2Fe-2S] cluster site. The fe-S binding site A stretch occupies residues 247-263 (CAPQPGKKRRACKDCTC). [4Fe-4S] cluster is bound by residues Cys-308, Cys-311, Cys-319, and Cys-322. Short sequence motifs (cx2C motif) lie at residues 308-311 (CNSC) and 319-322 (CADC). Positions 308 to 322 (CNSCYLGDAFRCADC) are fe-S binding site B.

The protein belongs to the anamorsin family. As to quaternary structure, monomer. Interacts with TAH18. Interacts with MIA40. [2Fe-2S] cluster serves as cofactor. The cofactor is [4Fe-4S] cluster.

The protein resides in the cytoplasm. It is found in the mitochondrion intermembrane space. Component of the cytosolic iron-sulfur (Fe-S) protein assembly (CIA) machinery required for the maturation of extramitochondrial Fe-S proteins. Part of an electron transfer chain functioning in an early step of cytosolic Fe-S biogenesis, facilitating the de novo assembly of a [4Fe-4S] cluster on the scaffold complex CFD1-NBP35. Electrons are transferred to DRE2 from NADPH via the FAD- and FMN-containing protein TAH18. TAH18-DRE2 are also required for the assembly of the diferric tyrosyl radical cofactor of ribonucleotide reductase (RNR), probably by providing electrons for reduction during radical cofactor maturation in the catalytic small subunit RNR2. This chain is Fe-S cluster assembly protein DRE2, found in Podospora anserina (strain S / ATCC MYA-4624 / DSM 980 / FGSC 10383) (Pleurage anserina).